The primary structure comprises 363 residues: MIIDTTKVQAINSFSRSESLKEVIGLIWMLVPILTLVLAITIGVLVIVWLERQISAGIQQRIGPEYAGPLGILQAIADGTKLLFKEDILPSRGDIRLFSIGPSIAVISIILSYSVIPFSYHLVLADLGIGVFLWIAVSSIAPIGLLMSGYGSNNKYSFSGGLRAAAQSISYEIPLTLCVLSISLLSNSLSTIDIVEVQSKYGIWGWNLWRQPVGFIVFLISSLAECERLPFDLPEAEEELVAGYQTEYSGIKFGLFYVASYLNLLVSSLFVTVLYFGGWNLSIPYTSIFGLFGINQTSGVFGTTMGMFITLAKTYLFLFISVATRWTLPRMRMDQLLNLGWKFLLPISLGNLLLTTSFQLLSL.

6 helical membrane-spanning segments follow: residues 30-50 (LVPILTLVLAITIGVLVIVWL), 104-124 (IAVISIILSYSVIPFSYHLVL), 127-147 (LGIGVFLWIAVSSIAPIGLLM), 253-273 (FGLFYVASYLNLLVSSLFVTV), 300-320 (VFGTTMGMFITLAKTYLFLFI), and 343-363 (FLLPISLGNLLLTTSFQLLSL).

The protein belongs to the complex I subunit 1 family. As to quaternary structure, NDH is composed of at least 16 different subunits, 5 of which are encoded in the nucleus.

It localises to the plastid. The protein localises to the chloroplast thylakoid membrane. The catalysed reaction is a plastoquinone + NADH + (n+1) H(+)(in) = a plastoquinol + NAD(+) + n H(+)(out). It carries out the reaction a plastoquinone + NADPH + (n+1) H(+)(in) = a plastoquinol + NADP(+) + n H(+)(out). NDH shuttles electrons from NAD(P)H:plastoquinone, via FMN and iron-sulfur (Fe-S) centers, to quinones in the photosynthetic chain and possibly in a chloroplast respiratory chain. The immediate electron acceptor for the enzyme in this species is believed to be plastoquinone. Couples the redox reaction to proton translocation, and thus conserves the redox energy in a proton gradient. The polypeptide is NAD(P)H-quinone oxidoreductase subunit 1, chloroplastic (Piper cenocladum (Ant piper)).